Consider the following 463-residue polypeptide: tRNA modification GTPase MnmE (463 aa).

The (6S)-5-formyl-5,6,7,8-tetrahydrofolate site is built by Arg-29, Glu-91, and Arg-130. The TrmE-type G domain occupies 225 to 384 (GLKVAIVGRP…LETAILEIVQ (160 aa)). Asn-235 contributes to the K(+) binding site. GTP contacts are provided by residues 235–240 (NVGKSS), 254–260 (TDLPGTT), and 279–282 (DTAG). Ser-239 contributes to the Mg(2+) binding site. K(+) contacts are provided by Thr-254, Leu-256, and Thr-259. A Mg(2+)-binding site is contributed by Thr-260. Residue Lys-463 coordinates (6S)-5-formyl-5,6,7,8-tetrahydrofolate.

Belongs to the TRAFAC class TrmE-Era-EngA-EngB-Septin-like GTPase superfamily. TrmE GTPase family. In terms of assembly, homodimer. Heterotetramer of two MnmE and two MnmG subunits. Requires K(+) as cofactor.

The protein localises to the cytoplasm. Exhibits a very high intrinsic GTPase hydrolysis rate. Involved in the addition of a carboxymethylaminomethyl (cmnm) group at the wobble position (U34) of certain tRNAs, forming tRNA-cmnm(5)s(2)U34. In Trichormus variabilis (strain ATCC 29413 / PCC 7937) (Anabaena variabilis), this protein is tRNA modification GTPase MnmE.